The following is a 288-amino-acid chain: Mortality factor 4-like protein 2 (288 aa).

The segment covering 1–15 (MSSRKQGSQPRGQQS) has biased composition (polar residues). The segment at 1–113 (MSSRKQGSQP…RADPTVESEE (113 aa)) is disordered. A Phosphoserine modification is found at Ser-71. The region spanning 117 to 288 (NRMEVKVKIP…ASAEYHRKAL (172 aa)) is the MRG domain.

In terms of assembly, component of the NuA4 histone acetyltransferase complex which contains the catalytic subunit KAT5/TIP60 and the subunits EP400, TRRAP/PAF400, BRD8/SMAP, EPC1, DMAP1/DNMAP1, RUVBL1/TIP49, RUVBL2, ING3, actin, ACTL6A/BAF53A, MORF4L1/MRG15, MORF4L2/MRGX, MRGBP, YEATS4/GAS41 and VPS72/YL1. The NuA4 complex interacts with MYC and the adenovirus E1A protein. MORF4L1 may also participate in the formation of NuA4 related complexes which lack the KAT5/TIP60 catalytic subunit, but which include the SWI/SNF related protein SRCAP. Component of the MSIN3A histone deacetylase complex, which includes SIN3A, HDAC2, ARID4B, MORF4L1, RBBP4/RbAp48, and RBBP7/RbAp46. Interacts with MRFAP1 and RB1. May also interact with one or more as yet undefined members of the TLE (transducin-like enhancer of split) family of transcriptional repressors.

The protein localises to the nucleus. Its function is as follows. Component of the NuA4 histone acetyltransferase complex which is involved in transcriptional activation of select genes principally by acetylation of nucleosomal histone H4 and H2A. This modification may both alter nucleosome - DNA interactions and promote interaction of the modified histones with other proteins which positively regulate transcription. This complex may be required for the activation of transcriptional programs associated with oncogene and proto-oncogene mediated growth induction, tumor suppressor mediated growth arrest and replicative senescence, apoptosis, and DNA repair. The NuA4 complex ATPase and helicase activities seem to be, at least in part, contributed by the association of RUVBL1 and RUVBL2 with EP400. NuA4 may also play a direct role in DNA repair when directly recruited to sites of DNA damage. Also a component of the MSIN3A complex which acts to repress transcription by deacetylation of nucleosomal histones. In Homo sapiens (Human), this protein is Mortality factor 4-like protein 2 (MORF4L2).